Consider the following 106-residue polypeptide: Insulin-like peptide 04 (106 aa).

Residues 1–22 form the signal peptide; that stretch reads MPRTFLVVLIYILAGFLCSTSA. Positions 23–37 are excised as a propeptide; the sequence is LRKVNEASGIKTDGS. 3 cysteine pairs are disulfide-bonded: C45/C50, C46/C80, and C59/C68. A propeptide spans 86 to 106 (c peptide); sequence RRKRSLTVDKREAKKFIRQRR.

It belongs to the insulin family.

Its subcellular location is the secreted. Its function is as follows. Insulin decreases blood glucose concentration. May have evolved to activate insulin receptors (INSR) in vertebrates. Molecular docking studies reveals unique interaction with the human insulin receptor. In vivo, insulin-like peptide injection reduces blood glucose levels in two models of zebrafish diabetes (streptozotocin- and glucose-induced). Also shorter swimming distance of zebrafish larvae, an effect which is not observed with human insulin. The protein is Insulin-like peptide 04 of Exaiptasia diaphana (Tropical sea anemone).